A 136-amino-acid chain; its full sequence is Peptide methionine sulfoxide reductase MsrB (136 aa).

Residues glutamate 13–lysine 135 enclose the MsrB domain. Zn(2+) is bound by residues cysteine 52, cysteine 55, cysteine 101, and cysteine 104. The active-site Nucleophile is the cysteine 124.

It belongs to the MsrB Met sulfoxide reductase family. Requires Zn(2+) as cofactor.

The enzyme catalyses L-methionyl-[protein] + [thioredoxin]-disulfide + H2O = L-methionyl-(R)-S-oxide-[protein] + [thioredoxin]-dithiol. In Synechococcus sp. (strain RCC307), this protein is Peptide methionine sulfoxide reductase MsrB.